The primary structure comprises 247 residues: Geranylgeranylglyceryl phosphate synthase (247 aa).

2 residues coordinate Mg(2+): aspartate 23 and serine 52. Residues 171-177, 203-204, and 225-226 each bind sn-glycerol 1-phosphate; these read YLEAGSG, GG, and GT.

Belongs to the GGGP/HepGP synthase family. Group II subfamily. Mg(2+) is required as a cofactor.

It is found in the cytoplasm. It catalyses the reaction sn-glycerol 1-phosphate + (2E,6E,10E)-geranylgeranyl diphosphate = sn-3-O-(geranylgeranyl)glycerol 1-phosphate + diphosphate. The protein operates within membrane lipid metabolism; glycerophospholipid metabolism. Prenyltransferase that catalyzes the transfer of the geranylgeranyl moiety of geranylgeranyl diphosphate (GGPP) to the C3 hydroxyl of sn-glycerol-1-phosphate (G1P). This reaction is the first ether-bond-formation step in the biosynthesis of archaeal membrane lipids. The protein is Geranylgeranylglyceryl phosphate synthase of Methanosarcina acetivorans (strain ATCC 35395 / DSM 2834 / JCM 12185 / C2A).